We begin with the raw amino-acid sequence, 523 residues long: Volkensin (523 aa).

Residues tyrosine 74, tyrosine 113, glutamate 162, and arginine 165 contribute to the active site. Position 111-113 (glycine 111–tyrosine 113) interacts with AMP. Intrachain disulfides connect cysteine 245–cysteine 269 and cysteine 285–cysteine 304. A propeptide spans glutamine 251–asparagine 265 (linker peptide). The Ricin B-type lectin 1 domain maps to proline 270–threonine 397. A carbohydrate-binding positions include aspartate 287 to glutamate 291, glutamine 300, lysine 305, and asparagine 311. The cysteines at positions 328 and 343 are disulfide-linked. The a carbohydrate site is built by asparagine 358 and asparagine 398. 2 N-linked (GlcNAc...) asparagine glycosylation sites follow: asparagine 358 and asparagine 398. The region spanning threonine 400–leucine 523 is the Ricin B-type lectin 2 domain. 2 disulfide bridges follow: cysteine 414/cysteine 427 and cysteine 453/cysteine 471.

It in the N-terminal section; belongs to the ribosome-inactivating protein family. Type 2 RIP subfamily. In terms of assembly, disulfide-linked dimer of A and B chains. Post-translationally, N-glycosylated. Contains mannose and galactose. Expressed in roots (at protein level). Expressed in seeds (at protein level).

The catalysed reaction is Endohydrolysis of the N-glycosidic bond at one specific adenosine on the 28S rRNA.. Its activity is regulated as follows. Hemagglutinating activity is inhibited by galactose and structurally related sugars. In terms of biological role, has N-glycosidase activity and is responsible for inhibiting protein synthesis through the catalytic inactivation of 60S ribosomal subunits by removing a specific adenine of 28S rRNA. Inhibits GTP-dependent binding of EF2 (elongation factor 2) to ribosomes. Binds to cell receptors and probably facilitates the entry into the cell of the A chain. Also acts as a galactose-specific lectin responsible for cell agglutination. In Adenia volkensii (Kilyambiti plant), this protein is Volkensin.